A 272-amino-acid polypeptide reads, in one-letter code: 2-C-methyl-D-erythritol 4-phosphate cytidylyltransferase (272 aa).

It belongs to the IspD/TarI cytidylyltransferase family. IspD subfamily.

The enzyme catalyses 2-C-methyl-D-erythritol 4-phosphate + CTP + H(+) = 4-CDP-2-C-methyl-D-erythritol + diphosphate. The protein operates within isoprenoid biosynthesis; isopentenyl diphosphate biosynthesis via DXP pathway; isopentenyl diphosphate from 1-deoxy-D-xylulose 5-phosphate: step 2/6. Catalyzes the formation of 4-diphosphocytidyl-2-C-methyl-D-erythritol from CTP and 2-C-methyl-D-erythritol 4-phosphate (MEP). The polypeptide is 2-C-methyl-D-erythritol 4-phosphate cytidylyltransferase (Xanthomonas oryzae pv. oryzae (strain MAFF 311018)).